Here is a 59-residue protein sequence, read N- to C-terminus: Protein translocase subunit SecE (59 aa).

A helical membrane pass occupies residues 30-50 (ITVISTVIFFVIFFALLDTGI).

Belongs to the SecE/SEC61-gamma family. As to quaternary structure, component of the Sec protein translocase complex. Heterotrimer consisting of SecY, SecE and SecG subunits. The heterotrimers can form oligomers, although 1 heterotrimer is thought to be able to translocate proteins. Interacts with the ribosome. Interacts with SecDF, and other proteins may be involved. Interacts with SecA.

Its subcellular location is the cell membrane. Functionally, essential subunit of the Sec protein translocation channel SecYEG. Clamps together the 2 halves of SecY. May contact the channel plug during translocation. This is Protein translocase subunit SecE from Bacillus subtilis (strain 168).